Reading from the N-terminus, the 119-residue chain is Large ribosomal subunit protein bL20 (119 aa).

It belongs to the bacterial ribosomal protein bL20 family.

Functionally, binds directly to 23S ribosomal RNA and is necessary for the in vitro assembly process of the 50S ribosomal subunit. It is not involved in the protein synthesizing functions of that subunit. This is Large ribosomal subunit protein bL20 from Shewanella sediminis (strain HAW-EB3).